Reading from the N-terminus, the 595-residue chain is Aspartate--tRNA(Asp/Asn) ligase (595 aa).

Glu-175 is a binding site for L-aspartate. Positions 199–202 (QQYK) are aspartate. Arg-221 and His-454 together coordinate L-aspartate. 221–223 (RDE) contacts ATP. Position 488 (Glu-488) interacts with ATP. An L-aspartate-binding site is contributed by Arg-495. Position 540 to 543 (540 to 543 (GIDR)) interacts with ATP.

It belongs to the class-II aminoacyl-tRNA synthetase family. Type 1 subfamily. Homodimer.

It is found in the cytoplasm. The catalysed reaction is tRNA(Asx) + L-aspartate + ATP = L-aspartyl-tRNA(Asx) + AMP + diphosphate. In terms of biological role, aspartyl-tRNA synthetase with relaxed tRNA specificity since it is able to aspartylate not only its cognate tRNA(Asp) but also tRNA(Asn). Reaction proceeds in two steps: L-aspartate is first activated by ATP to form Asp-AMP and then transferred to the acceptor end of tRNA(Asp/Asn). This chain is Aspartate--tRNA(Asp/Asn) ligase, found in Sinorhizobium fredii (strain NBRC 101917 / NGR234).